A 114-amino-acid polypeptide reads, in one-letter code: Chaperonin GroEL (114 aa).

Residue 22–26 (DGTTT) coordinates ATP.

Belongs to the chaperonin (HSP60) family. In terms of assembly, forms a cylinder of 14 subunits composed of two heptameric rings stacked back-to-back. Interacts with the co-chaperonin GroES.

It localises to the cytoplasm. It catalyses the reaction ATP + H2O + a folded polypeptide = ADP + phosphate + an unfolded polypeptide.. Its function is as follows. Together with its co-chaperonin GroES, plays an essential role in assisting protein folding. The GroEL-GroES system forms a nano-cage that allows encapsulation of the non-native substrate proteins and provides a physical environment optimized to promote and accelerate protein folding. The sequence is that of Chaperonin GroEL from Mycobacterium ulcerans.